The sequence spans 213 residues: Glutamine amidotransferase-like class 1 domain-containing protein 1 (213 aa).

An N-terminal signal peptide occupies residues 1 to 20 (MTSKPTCLIVASAASAGVSA).

This sequence belongs to the peptidase C56 family. In terms of assembly, homotetramer. Component of the FERRY complex.

The protein localises to the secreted. Its subcellular location is the early endosome. Functionally, component of the FERRY complex (Five-subunit Endosomal Rab5 and RNA/ribosome intermediary). The FERRY complex directly interacts with mRNAs and RAB5A, and functions as a RAB5A effector involved in the localization and the distribution of specific mRNAs most likely by mediating their endosomal transport. The complex recruits mRNAs and ribosomes to early endosomes through direct mRNA-interaction. The sequence is that of Glutamine amidotransferase-like class 1 domain-containing protein 1 from Danio rerio (Zebrafish).